We begin with the raw amino-acid sequence, 340 residues long: Dihydroorotate dehydrogenase (quinone) (340 aa).

Residues 61–65 (AGLDK) and Thr-85 each bind FMN. Position 65 (Lys-65) interacts with substrate. A substrate-binding site is contributed by 110–114 (NRMGF). 2 residues coordinate FMN: Asn-138 and Asn-171. Asn-171 provides a ligand contact to substrate. The active-site Nucleophile is the Ser-174. Asn-176 lines the substrate pocket. 2 residues coordinate FMN: Lys-216 and Thr-244. 245-246 (NT) contacts substrate. FMN-binding positions include Gly-267, Gly-296, and 317-318 (YT).

The protein belongs to the dihydroorotate dehydrogenase family. Type 2 subfamily. Monomer. It depends on FMN as a cofactor.

Its subcellular location is the cell membrane. The catalysed reaction is (S)-dihydroorotate + a quinone = orotate + a quinol. It participates in pyrimidine metabolism; UMP biosynthesis via de novo pathway; orotate from (S)-dihydroorotate (quinone route): step 1/1. Its function is as follows. Catalyzes the conversion of dihydroorotate to orotate with quinone as electron acceptor. This is Dihydroorotate dehydrogenase (quinone) from Marinobacter nauticus (strain ATCC 700491 / DSM 11845 / VT8) (Marinobacter aquaeolei).